A 169-amino-acid polypeptide reads, in one-letter code: Nucleoside diphosphate kinase 3-A (169 aa).

Residues K29, R105, T111, R122, V129, and N132 each contribute to the ADP site. H135 functions as the Pros-phosphohistidine intermediate in the catalytic mechanism.

The protein belongs to the NDK family. As to quaternary structure, homohexamer. It depends on Mg(2+) as a cofactor.

The protein resides in the mitochondrion outer membrane. Its subcellular location is the cytoplasm. It localises to the cytoskeleton. It is found in the cilium basal body. The enzyme catalyses a 2'-deoxyribonucleoside 5'-diphosphate + ATP = a 2'-deoxyribonucleoside 5'-triphosphate + ADP. It carries out the reaction a ribonucleoside 5'-diphosphate + ATP = a ribonucleoside 5'-triphosphate + ADP. Catalyzes the phosphorylation of ribonucleosides and deoxyribonucleoside diphosphates, other than ATP, into the corresponding triphosphates with ATP as the major phosphate donor. The ATP gamma phosphate is transferred to the nucleoside diphosphate beta phosphate via a ping-pong mechanism, using a phosphorylated active-site intermediate. Through the catalyzed exchange of gamma-phosphate between di- and triphosphonucleosides participates in regulation of intracellular nucleotide homeostasis. Required for ciliary function during renal development. In terms of biological role, independently of its kinase activity, facilitates mitochondrial tethering prior to membrane fusion through its direct membrane-binding and hexamerization. Implicated in repair of both single- and double-stranded breaks in DNA, independently of its kinase activity. This is Nucleoside diphosphate kinase 3-A from Xenopus laevis (African clawed frog).